Reading from the N-terminus, the 392-residue chain is Imidazolonepropionase (392 aa).

Fe(3+)-binding residues include H70 and H72. Zn(2+) is bound by residues H70 and H72. R79, Y137, and H164 together coordinate 4-imidazolone-5-propanoate. Y137 is an N-formimidoyl-L-glutamate binding site. Residue H227 participates in Fe(3+) binding. H227 contributes to the Zn(2+) binding site. Residue Q230 coordinates 4-imidazolone-5-propanoate. Position 301 (D301) interacts with Fe(3+). D301 contributes to the Zn(2+) binding site. N-formimidoyl-L-glutamate contacts are provided by N303 and G305. T306 contributes to the 4-imidazolone-5-propanoate binding site.

The protein belongs to the metallo-dependent hydrolases superfamily. HutI family. Zn(2+) serves as cofactor. The cofactor is Fe(3+).

It localises to the cytoplasm. The enzyme catalyses 4-imidazolone-5-propanoate + H2O = N-formimidoyl-L-glutamate. Its pathway is amino-acid degradation; L-histidine degradation into L-glutamate; N-formimidoyl-L-glutamate from L-histidine: step 3/3. In terms of biological role, catalyzes the hydrolytic cleavage of the carbon-nitrogen bond in imidazolone-5-propanoate to yield N-formimidoyl-L-glutamate. It is the third step in the universal histidine degradation pathway. This Nocardia farcinica (strain IFM 10152) protein is Imidazolonepropionase.